The chain runs to 400 residues: Protein phosphatase methylesterase 1 (400 aa).

The segment at 1–72 is disordered; the sequence is MSDLQRTWAK…NQKLFARPQG (72 aa). The segment covering 19–28 has biased composition (acidic residues); it reads PFDEPQEEQG. A compositionally biased stretch (low complexity) spans 44–54; it reads SSASSASSVSS. Polar residues predominate over residues 55–64; the sequence is TGTIIPSPNQ. Catalysis depends on residues Ser202, Asp228, and His358.

This sequence belongs to the AB hydrolase superfamily.

It catalyses the reaction [phosphatase 2A protein]-C-terminal L-leucine methyl ester + H2O = [phosphatase 2A protein]-C-terminal L-leucine + methanol + H(+). Demethylates proteins that have been reversibly carboxymethylated. Demethylates the phosphatase PP2A catalytic subunit. In Gibberella zeae (strain ATCC MYA-4620 / CBS 123657 / FGSC 9075 / NRRL 31084 / PH-1) (Wheat head blight fungus), this protein is Protein phosphatase methylesterase 1 (PPE1).